Reading from the N-terminus, the 441-residue chain is tRNA (guanine(37)-N(1))-methyltransferase (441 aa).

A mitochondrion-targeting transit peptide spans 1–9 (MFAPPAARA). S-adenosyl-L-methionine is bound by residues arginine 221, 248-249 (DL), 276-277 (DG), and asparagine 331.

This sequence belongs to the class I-like SAM-binding methyltransferase superfamily. TRM5/TYW2 family. As to quaternary structure, monomer.

It localises to the mitochondrion matrix. The protein localises to the nucleus. The protein resides in the cytoplasm. It carries out the reaction guanosine(37) in tRNA + S-adenosyl-L-methionine = N(1)-methylguanosine(37) in tRNA + S-adenosyl-L-homocysteine + H(+). Its function is as follows. Specifically methylates the N1 position of guanosine-37 in various cytoplasmic and mitochondrial tRNAs. Methylation is not dependent on the nature of the nucleoside 5' of the target nucleoside. This is the first step in the biosynthesis of wybutosine (yW), a modified base adjacent to the anticodon of tRNAs and required for accurate decoding. The protein is tRNA (guanine(37)-N(1))-methyltransferase of Phaeosphaeria nodorum (strain SN15 / ATCC MYA-4574 / FGSC 10173) (Glume blotch fungus).